We begin with the raw amino-acid sequence, 154 residues long: Protein X (154 aa).

Residues 68 to 117 form a mitochondrial targeting sequence region; sequence PCALRFTSARRMETTVNAHQFLPKVLYKRTLGLSVMSTTDLEAYFKDCLF.

This sequence belongs to the orthohepadnavirus protein X family. In terms of assembly, may form homodimer. May interact with host CEBPA, CFLAR, CREB1, DDB1, E4F1, HBXIP, HSPD1/HSP60, NFKBIA, POLR2E and SMAD4. Interacts with host SMC5-SMC6 complex and induces its degradation. Interacts with host TRPC4AP; leading to prevent ubiquitination of TRPC4AP. Interacts with host PLSCR1; this interaction promotes ubiquitination and degradation of HBx and impairs HBx-mediated cell proliferation. Post-translationally, a fraction may be phosphorylated in insect cells and HepG2 cells, a human hepatoblastoma cell line. Phosphorylated in vitro by host protein kinase C or mitogen-activated protein kinase. N-acetylated in insect cells.

It is found in the host cytoplasm. The protein resides in the host nucleus. The protein localises to the host mitochondrion. Multifunctional protein that plays a role in silencing host antiviral defenses and promoting viral transcription. Does not seem to be essential for HBV infection. May be directly involved in development of cirrhosis and liver cancer (hepatocellular carcinoma). Most of cytosolic activities involve modulation of cytosolic calcium. The effect on apoptosis is controversial depending on the cell types in which the studies have been conducted. May induce apoptosis by localizing in mitochondria and causing loss of mitochondrial membrane potential. May also modulate apoptosis by binding host CFLAR, a key regulator of the death-inducing signaling complex (DISC). Promotes viral transcription by using the host E3 ubiquitin ligase DDB1 to target the SMC5-SMC6 complex to proteasomal degradation. This host complex would otherwise bind to viral episomal DNA, and prevents its transcription. Moderately stimulates transcription of many different viral and cellular transcription elements. Promoters and enhancers stimulated by HBx contain DNA binding sites for NF-kappa-B, AP-1, AP-2, c-EBP, ATF/CREB, or the calcium-activated factor NF-AT. This is Protein X from Homo sapiens (Human).